A 91-amino-acid chain; its full sequence is DNA-directed RNA polymerase subunit Rpo11 (91 aa).

Belongs to the archaeal Rpo11/eukaryotic RPB11/RPC19 RNA polymerase subunit family. Part of the RNA polymerase complex.

The protein resides in the cytoplasm. It carries out the reaction RNA(n) + a ribonucleoside 5'-triphosphate = RNA(n+1) + diphosphate. DNA-dependent RNA polymerase (RNAP) catalyzes the transcription of DNA into RNA using the four ribonucleoside triphosphates as substrates. This chain is DNA-directed RNA polymerase subunit Rpo11, found in Methanothrix thermoacetophila (strain DSM 6194 / JCM 14653 / NBRC 101360 / PT) (Methanosaeta thermophila).